The following is a 152-amino-acid chain: UPF0266 membrane protein YobD (152 aa).

A run of 3 helical transmembrane segments spans residues 6 to 26 (LVLILFIAALLAYALYDQFIM), 45 to 65 (VDSVIFVGLVAILIYNNVTSH), and 67 to 87 (AQMTTWLLSALALMGFYIFWI).

Belongs to the UPF0266 family.

It is found in the cell inner membrane. The polypeptide is UPF0266 membrane protein YobD (Salmonella enteritidis PT4 (strain P125109)).